The chain runs to 68 residues: Putative protein YfaH (68 aa).

The chain is Putative protein YfaH (yfaH) from Escherichia coli (strain K12).